Consider the following 1059-residue polypeptide: Endo-1,4-beta-xylanase A (1059 aa).

Positions 1 to 30 (MQVRKRRGLLDVSTAVLVGILAGFLGVVLA) are cleaved as a signal peptide. The interval 47-199 (SSLETVLALS…LDKVQVLAPK (153 aa)) is A-1. The tract at residues 200 to 354 (ESGPKVIYET…DDVKIVDTTS (155 aa)) is A-2. The 329-residue stretch at 364-692 (EKEIPALKEV…KLAYWAIVAP (329 aa)) folds into the GH10 domain. Glu502 acts as the Proton donor in catalysis. Glu608 serves as the catalytic Nucleophile. CBM-cenC domains are found at residues 700–870 (KESR…LEGI) and 871–1059 (MVAT…RLIK).

It belongs to the glycosyl hydrolase 10 (cellulase F) family.

The catalysed reaction is Endohydrolysis of (1-&gt;4)-beta-D-xylosidic linkages in xylans.. In Thermotoga maritima (strain ATCC 43589 / DSM 3109 / JCM 10099 / NBRC 100826 / MSB8), this protein is Endo-1,4-beta-xylanase A (xynA).